Here is a 156-residue protein sequence, read N- to C-terminus: Aspartate carbamoyltransferase regulatory chain (156 aa).

4 residues coordinate Zn(2+): C109, C114, C140, and C143.

Belongs to the PyrI family. As to quaternary structure, contains catalytic and regulatory chains. It depends on Zn(2+) as a cofactor.

Involved in allosteric regulation of aspartate carbamoyltransferase. In Methanosarcina acetivorans (strain ATCC 35395 / DSM 2834 / JCM 12185 / C2A), this protein is Aspartate carbamoyltransferase regulatory chain.